The sequence spans 293 residues: Oxidoreductase R2 (293 aa).

Belongs to the asaB hydroxylase/desaturase family.

Its pathway is secondary metabolite biosynthesis. Oxidoreductase; part of the gene cluster that mediates the biosynthesis of squalestatin S1 (SQS1, also known as zaragozic acid A), a heavily oxidized fungal polyketide that offers potent cholesterol lowering activity by targeting squalene synthase (SS). SQS1 is composed of a 2,8-dioxobicyclic[3.2.1]octane-3,4,5-tricarboxyclic acid core that is connected to two lipophilic polyketide arms. These initial steps feature the priming of an unusual benzoic acid starter unit onto the highly reducing polyketide synthase pks2, followed by oxaloacetate extension and product release to generate a tricarboxylic acid containing product. The phenylalanine ammonia lyase (PAL) M7 and the acyl-CoA ligase M9 are involved in transforming phenylalanine into benzoyl-CoA. The citrate synthase-like protein R3 is involved in connecting the C-alpha-carbons of the hexaketide chain and oxaloacetate to afford the tricarboxylic acid unit. The potential hydrolytic enzymes, M8 and M10, are in close proximity to pks2 and may participate in product release. On the other side, the tetraketide arm is synthesized by a the squalestatin tetraketide synthase pks1 and enzymatically esterified to the core in the last biosynthetic step, by the acetyltransferase M4. The biosynthesis of the tetraketide must involve 3 rounds of chain extension. After the first and second rounds methyl-transfer occurs, and in all rounds of extension the ketoreductase and dehydratase are active. The enoyl reductase and C-MeT of pks1 are not active in the final round of extension. The acetyltransferase M4 appears to have a broad substrate selectivity for its acyl CoA substrate, allowing the in vitro synthesis of novel squalestatins. The biosynthesis of SQS1 requires several oxidative steps likely performed by oxidoreductases M1, R1 and R2. Finally, in support of the identification of the cluster as being responsible for SQS1 production, the cluster contains a gene encoding a putative squalene synthase (SS) R6, suggesting a likely mechanism for self-resistance. This Phoma sp. (strain ATCC 20986 / MF5453) protein is Oxidoreductase R2.